Here is a 119-residue protein sequence, read N- to C-terminus: Small ribosomal subunit protein bS16 (119 aa).

Belongs to the bacterial ribosomal protein bS16 family.

The chain is Small ribosomal subunit protein bS16 from Chlamydia abortus (strain DSM 27085 / S26/3) (Chlamydophila abortus).